We begin with the raw amino-acid sequence, 123 residues long: Ribosome-binding factor A (123 aa).

The protein belongs to the RbfA family. In terms of assembly, monomer. Binds 30S ribosomal subunits, but not 50S ribosomal subunits or 70S ribosomes.

The protein localises to the cytoplasm. One of several proteins that assist in the late maturation steps of the functional core of the 30S ribosomal subunit. Associates with free 30S ribosomal subunits (but not with 30S subunits that are part of 70S ribosomes or polysomes). Required for efficient processing of 16S rRNA. May interact with the 5'-terminal helix region of 16S rRNA. The protein is Ribosome-binding factor A of Prochlorococcus marinus (strain NATL1A).